The following is a 320-amino-acid chain: Bifunctional phosphoglucose/phosphomannose isomerase (320 aa).

The SIS domain occupies isoleucine 20–leucine 153. The D-fructose 6-phosphate site is built by glycine 37, serine 38, serine 80, serine 82, threonine 85, and arginine 132. The active-site Proton acceptor is glutamate 204. D-fructose 6-phosphate contacts are provided by histidine 220 and lysine 313. The active-site Proton donor is histidine 220. Residue lysine 313 is the Proton acceptor of the active site.

The protein belongs to the PGI/PMI family. Homodimer.

It catalyses the reaction alpha-D-glucose 6-phosphate = beta-D-fructose 6-phosphate. The enzyme catalyses D-mannose 6-phosphate = D-fructose 6-phosphate. In terms of biological role, dual specificity isomerase that catalyzes the isomerization of both glucose-6-phosphate and mannose-6-phosphate to fructose-6-phosphate. The chain is Bifunctional phosphoglucose/phosphomannose isomerase from Aquifex aeolicus (strain VF5).